Reading from the N-terminus, the 432-residue chain is MPDYVNWLRHASPYINSHRDRTFVVMLPGEGVEHPNFGNIVHDLVLLHSLGARLVLVHGSRPQIESRLAARGLAPRYHRDLRVTDAPTLECVIDAVGSLRIAIEARLSMDMAASPMQGARLRVAGGNLVTARPIGVVEGVDYHHTGEVRRIDRKGIGRLLDERSIVLLSPLGYSPTGEIFNLACEDVAMRAAIDLEAEKLILYGAEQGLLDASGKLVRELRPQQVPAHLQRLGNSYQAELLDAAAQACRAGVKRSHIVSYTEDGALLSELFTRTGNGTLVAQEQFEQLREAGIEDVGGLIELIRPLEEQGILVRRSREVLEREIEQFSIVEREGLIIACAALYPIADSEAGELACLAVNPEYRHGGRGDELLERIEERARGLGLKTLFVLTTRTAHWFRERGFQPSSVERLPAARASLYNFQRNSQVFEKSL.

In terms of domain architecture, N-acetyltransferase spans 286–425 (EQLREAGIED…ASLYNFQRNS (140 aa)).

Belongs to the acetyltransferase family. ArgA subfamily.

The protein localises to the cytoplasm. It carries out the reaction L-glutamate + acetyl-CoA = N-acetyl-L-glutamate + CoA + H(+). The protein operates within amino-acid biosynthesis; L-arginine biosynthesis; N(2)-acetyl-L-ornithine from L-glutamate: step 1/4. This is Amino-acid acetyltransferase from Pseudomonas paraeruginosa (strain DSM 24068 / PA7) (Pseudomonas aeruginosa (strain PA7)).